The sequence spans 81 residues: MDSVISAASVIAAGLAVGLASIGPGVGQGTAAGQAVEGIARQPEAEGKIRGTLLLSLAFMEALTIYGLVVALALLFANPFV.

The next 2 helical transmembrane spans lie at 4-24 (VISA…SIGP) and 57-77 (LAFM…LLFA).

Belongs to the ATPase C chain family. As to quaternary structure, F-type ATPases have 2 components, F(1) - the catalytic core - and F(0) - the membrane proton channel. F(1) has five subunits: alpha(3), beta(3), gamma(1), delta(1), epsilon(1). F(0) has four main subunits: a(1), b(1), b'(1) and c(10-14). The alpha and beta chains form an alternating ring which encloses part of the gamma chain. F(1) is attached to F(0) by a central stalk formed by the gamma and epsilon chains, while a peripheral stalk is formed by the delta, b and b' chains.

The protein resides in the plastid. It localises to the chloroplast thylakoid membrane. Functionally, f(1)F(0) ATP synthase produces ATP from ADP in the presence of a proton or sodium gradient. F-type ATPases consist of two structural domains, F(1) containing the extramembraneous catalytic core and F(0) containing the membrane proton channel, linked together by a central stalk and a peripheral stalk. During catalysis, ATP synthesis in the catalytic domain of F(1) is coupled via a rotary mechanism of the central stalk subunits to proton translocation. Key component of the F(0) channel; it plays a direct role in translocation across the membrane. A homomeric c-ring of between 10-14 subunits forms the central stalk rotor element with the F(1) delta and epsilon subunits. The polypeptide is ATP synthase subunit c, chloroplastic (Zygnema circumcarinatum (Green alga)).